A 260-amino-acid polypeptide reads, in one-letter code: Thiazole synthase (260 aa).

Lysine 96 (schiff-base intermediate with DXP) is an active-site residue. 1-deoxy-D-xylulose 5-phosphate is bound by residues glycine 157, 184-185, and 206-207; these read AG and NT.

It belongs to the ThiG family. Homotetramer. Forms heterodimers with either ThiH or ThiS.

The protein resides in the cytoplasm. It carries out the reaction [ThiS sulfur-carrier protein]-C-terminal-Gly-aminoethanethioate + 2-iminoacetate + 1-deoxy-D-xylulose 5-phosphate = [ThiS sulfur-carrier protein]-C-terminal Gly-Gly + 2-[(2R,5Z)-2-carboxy-4-methylthiazol-5(2H)-ylidene]ethyl phosphate + 2 H2O + H(+). The protein operates within cofactor biosynthesis; thiamine diphosphate biosynthesis. In terms of biological role, catalyzes the rearrangement of 1-deoxy-D-xylulose 5-phosphate (DXP) to produce the thiazole phosphate moiety of thiamine. Sulfur is provided by the thiocarboxylate moiety of the carrier protein ThiS. In vitro, sulfur can be provided by H(2)S. The polypeptide is Thiazole synthase (Rhodopseudomonas palustris (strain HaA2)).